Reading from the N-terminus, the 192-residue chain is Fe/S biogenesis protein NfuA (192 aa).

[4Fe-4S] cluster contacts are provided by Cys149 and Cys152.

Belongs to the NfuA family. Homodimer. The cofactor is [4Fe-4S] cluster.

In terms of biological role, involved in iron-sulfur cluster biogenesis. Binds a 4Fe-4S cluster, can transfer this cluster to apoproteins, and thereby intervenes in the maturation of Fe/S proteins. Could also act as a scaffold/chaperone for damaged Fe/S proteins. The polypeptide is Fe/S biogenesis protein NfuA (Shewanella sediminis (strain HAW-EB3)).